Here is a 348-residue protein sequence, read N- to C-terminus: Phosphoribosylformylglycinamidine cyclo-ligase (348 aa).

The protein belongs to the AIR synthase family.

Its subcellular location is the cytoplasm. It catalyses the reaction 2-formamido-N(1)-(5-O-phospho-beta-D-ribosyl)acetamidine + ATP = 5-amino-1-(5-phospho-beta-D-ribosyl)imidazole + ADP + phosphate + H(+). The protein operates within purine metabolism; IMP biosynthesis via de novo pathway; 5-amino-1-(5-phospho-D-ribosyl)imidazole from N(2)-formyl-N(1)-(5-phospho-D-ribosyl)glycinamide: step 2/2. This is Phosphoribosylformylglycinamidine cyclo-ligase from Geotalea daltonii (strain DSM 22248 / JCM 15807 / FRC-32) (Geobacter daltonii).